The sequence spans 234 residues: Proteasome subunit alpha type-2 (234 aa).

N-acetylalanine is present on Ala-2. A Phosphotyrosine modification is found at Tyr-6. Residues Ser-7, Ser-14, and Ser-16 each carry the phosphoserine modification. Tyr-24 is modified (phosphotyrosine). Lys-70 carries the post-translational modification N6-acetyllysine. Tyr-76 and Tyr-121 each carry phosphotyrosine. Position 171 is an N6-acetyllysine (Lys-171).

It belongs to the peptidase T1A family. The 26S proteasome consists of a 20S proteasome core and two 19S regulatory subunits. The 20S proteasome core is a barrel-shaped complex made of 28 subunits that are arranged in four stacked rings. The two outer rings are each formed by seven alpha subunits, and the two inner rings are formed by seven beta subunits. The proteolytic activity is exerted by three beta-subunits PSMB5, PSMB6 and PSMB7. Phosphorylated on tyrosine residues; which may be important for nuclear import.

The protein resides in the cytoplasm. Its subcellular location is the nucleus. Component of the 20S core proteasome complex involved in the proteolytic degradation of most intracellular proteins. This complex plays numerous essential roles within the cell by associating with different regulatory particles. Associated with two 19S regulatory particles, forms the 26S proteasome and thus participates in the ATP-dependent degradation of ubiquitinated proteins. The 26S proteasome plays a key role in the maintenance of protein homeostasis by removing misfolded or damaged proteins that could impair cellular functions, and by removing proteins whose functions are no longer required. Associated with the PA200 or PA28, the 20S proteasome mediates ubiquitin-independent protein degradation. This type of proteolysis is required in several pathways including spermatogenesis (20S-PA200 complex) or generation of a subset of MHC class I-presented antigenic peptides (20S-PA28 complex). In Bos taurus (Bovine), this protein is Proteasome subunit alpha type-2 (PSMA2).